The following is a 169-amino-acid chain: Large ribosomal subunit protein uL23 (169 aa).

The segment at 1–20 (MAGKKVKSNTPKQDLSVSKS) is disordered. The span at 8–20 (SNTPKQDLSVSKS) shows a compositional bias: polar residues.

It belongs to the universal ribosomal protein uL23 family.

Functionally, this protein binds to a specific region on the 26S rRNA. The sequence is that of Large ribosomal subunit protein uL23 (rpl23a) from Dictyostelium discoideum (Social amoeba).